The primary structure comprises 336 residues: Ornithine carbamoyltransferase, catabolic (336 aa).

Carbamoyl phosphate-binding positions include 57-60 (STRT), Gln-84, Arg-108, and 135-138 (HPTQ). Residues Asn-168, Asp-232, and 236-237 (SM) contribute to the L-ornithine site. Residues 274–275 (CL) and Arg-321 contribute to the carbamoyl phosphate site.

This sequence belongs to the aspartate/ornithine carbamoyltransferase superfamily. OTCase family.

Its subcellular location is the cytoplasm. The catalysed reaction is carbamoyl phosphate + L-ornithine = L-citrulline + phosphate + H(+). It participates in amino-acid degradation; L-arginine degradation via ADI pathway; carbamoyl phosphate from L-arginine: step 2/2. Functionally, reversibly catalyzes the transfer of the carbamoyl group from carbamoyl phosphate (CP) to the N(epsilon) atom of ornithine (ORN) to produce L-citrulline. In Burkholderia mallei (strain ATCC 23344), this protein is Ornithine carbamoyltransferase, catabolic.